The following is a 562-amino-acid chain: Nicotinate phosphoribosyltransferase (562 aa).

Residues tyrosine 36, phenylalanine 183, and threonine 225 each coordinate nicotinate. Histidine 228 carries the post-translational modification Phosphohistidine. Residue threonine 397 coordinates 5-phospho-alpha-D-ribose 1-diphosphate.

This sequence belongs to the NAPRTase family. Mg(2+) serves as cofactor. It depends on Mn(2+) as a cofactor. In terms of processing, transiently phosphorylated on a His residue during the reaction cycle. Phosphorylation strongly increases the affinity for substrates and increases the rate of nicotinate D-ribonucleotide production. Dephosphorylation regenerates the low-affinity form of the enzyme, leading to product release.

The catalysed reaction is nicotinate + 5-phospho-alpha-D-ribose 1-diphosphate + ATP + H2O = nicotinate beta-D-ribonucleotide + ADP + phosphate + diphosphate. The protein operates within cofactor biosynthesis; NAD(+) biosynthesis; nicotinate D-ribonucleotide from nicotinate: step 1/1. In terms of biological role, catalyzes the first step in the biosynthesis of NAD from nicotinic acid, the ATP-dependent synthesis of beta-nicotinate D-ribonucleotide from nicotinate and 5-phospho-D-ribose 1-phosphate. Helps prevent cellular oxidative stress via its role in NAD biosynthesis. In Caenorhabditis elegans, this protein is Nicotinate phosphoribosyltransferase.